We begin with the raw amino-acid sequence, 724 residues long: Propionyl-CoA carboxylase alpha chain, mitochondrial (724 aa).

The 448-residue stretch at 48 to 495 (KFDKILIANR…TTKYLPEVYP (448 aa)) folds into the Biotin carboxylation domain. Residues K163, 195 to 256 (SRDI…PRHI), E247, and N282 each bind ATP. One can recognise an ATP-grasp domain in the interval 167-364 (KKIATAARVS…IVQQMLRVSY (198 aa)). Residues E322, E335, and N337 each coordinate Mg(2+). Mn(2+)-binding residues include E322, E335, and N337. Residue R339 is part of the active site. Biotin is bound at residue F395. The region spanning 649-724 (KAKVDLSTVV…DEGEVLVELE (76 aa)) is the Biotinyl-binding domain. K690 is subject to N6-biotinyllysine.

The holoenzyme is a dodecamer composed of 6 alpha subunits and 6 beta subunits. Interacts with sir-2.2 and sir-2.3. The cofactor is biotin. Requires Mg(2+) as cofactor. Mn(2+) is required as a cofactor. Post-translationally, the biotin cofactor is covalently attached to the C-terminal biotinyl-binding domain and is required for the catalytic activity.

The protein resides in the mitochondrion matrix. The catalysed reaction is propanoyl-CoA + hydrogencarbonate + ATP = (S)-methylmalonyl-CoA + ADP + phosphate + H(+). It catalyses the reaction butanoyl-CoA + hydrogencarbonate + ATP = (2S)-ethylmalonyl-CoA + ADP + phosphate + H(+). It participates in metabolic intermediate metabolism; propanoyl-CoA degradation; succinyl-CoA from propanoyl-CoA: step 1/3. Its function is as follows. This is one of the 2 subunits of the biotin-dependent propionyl-CoA carboxylase (PCC), a mitochondrial enzyme involved in the catabolism of odd chain fatty acids, branched-chain amino acids isoleucine, threonine, methionine, and valine and other metabolites. Propionyl-CoA carboxylase catalyzes the carboxylation of propionyl-CoA/propanoyl-CoA to D-methylmalonyl-CoA/(S)-methylmalonyl-CoA. Within the holoenzyme, the alpha subunit catalyzes the ATP-dependent carboxylation of the biotin carried by the biotin carboxyl carrier (BCC) domain, while the beta subunit then transfers the carboxyl group from carboxylated biotin to propionyl-CoA. Propionyl-CoA carboxylase also significantly acts on butyryl-CoA/butanoyl-CoA, which is converted to ethylmalonyl-CoA/(2S)-ethylmalonyl-CoA. Other alternative minor substrates include (2E)-butenoyl-CoA/crotonoyl-CoA. This Caenorhabditis elegans protein is Propionyl-CoA carboxylase alpha chain, mitochondrial (pcca-1).